The following is a 254-amino-acid chain: 3-oxo-5-alpha-steroid 4-dehydrogenase 2 (254 aa).

Transmembrane regions (helical) follow at residues 8 to 28 (VPVLAGSATLATMGTLILCLG), 72 to 92 (PRSLFGPPGNVLLALFSAHYF), 146 to 166 (FSFGVFLFILGMGINIHSDYT), and 206 to 226 (LATWSVPAFAFAFFTLCFLGM).

It belongs to the steroid 5-alpha reductase family. Expressed in high levels in the prostate and many other androgen-sensitive tissues.

Its subcellular location is the microsome membrane. The protein resides in the endoplasmic reticulum membrane. The enzyme catalyses a 3-oxo-5alpha-steroid + NADP(+) = a 3-oxo-Delta(4)-steroid + NADPH + H(+). It carries out the reaction 17beta-hydroxy-5alpha-androstan-3-one + NADP(+) = testosterone + NADPH + H(+). The catalysed reaction is 5alpha-pregnane-3,20-dione + NADP(+) = progesterone + NADPH + H(+). Converts testosterone (T) into 5-alpha-dihydrotestosterone (DHT) and progesterone or corticosterone into their corresponding 5-alpha-3-oxosteroids. It plays a central role in sexual differentiation and androgen physiology. The polypeptide is 3-oxo-5-alpha-steroid 4-dehydrogenase 2 (Srd5a2) (Rattus norvegicus (Rat)).